Consider the following 247-residue polypeptide: MMERAEDLRLSLSLSSPLIAPRTHHVAMLFHAPPEKRFLEMPLLPAAKRSEVVAAEEERAGLRGGGGSDEEDGGCGIDGSRKKLRLSKDQSAVLEDSFREHPTLNPRQKATLAQQLGLRPRQVEVWFQNRRARTKLKQTEVDCEFLKRCCETLTEENRRLQKEVQELRALKLVSPHLYMNMSPPTTLTMCPSCERVSNTNNNSSAAAAADRRGIRTTTAAAGGSVVDTAADGGILCHRPIAVRPQQS.

Residues 58-81 are disordered; it reads ERAGLRGGGGSDEEDGGCGIDGSR. The homeobox DNA-binding region spans 79 to 138; sequence GSRKKLRLSKDQSAVLEDSFREHPTLNPRQKATLAQQLGLRPRQVEVWFQNRRARTKLKQ. The tract at residues 137–182 is leucine-zipper; it reads KQTEVDCEFLKRCCETLTEENRRLQKEVQELRALKLVSPHLYMNMS.

This sequence belongs to the HD-ZIP homeobox family. Class II subfamily. In terms of tissue distribution, expressed in seedlings, roots, stems, leaf sheaths and blades and panicles.

It is found in the nucleus. Functionally, probable transcription factor. This chain is Homeobox-leucine zipper protein HOX17 (HOX17), found in Oryza sativa subsp. indica (Rice).